The sequence spans 60 residues: Large ribosomal subunit protein bL32 (60 aa).

Positions 1–16 (MAVPRRKTSPSRRGMR) are enriched in basic residues. Positions 1–60 (MAVPRRKTSPSRRGMRRSADAIKKPTYVEDKDSGELRRPHHLDLKTGMYKGRQVLKKKES) are disordered. The span at 17–44 (RSADAIKKPTYVEDKDSGELRRPHHLDL) shows a compositional bias: basic and acidic residues.

This sequence belongs to the bacterial ribosomal protein bL32 family.

This Bradyrhizobium diazoefficiens (strain JCM 10833 / BCRC 13528 / IAM 13628 / NBRC 14792 / USDA 110) protein is Large ribosomal subunit protein bL32.